A 611-amino-acid chain; its full sequence is Dihydroxy-acid dehydratase (611 aa).

Asp81 contacts Mg(2+). Cys122 contributes to the [2Fe-2S] cluster binding site. Positions 123 and 124 each coordinate Mg(2+). An N6-carboxylysine modification is found at Lys124. A [2Fe-2S] cluster-binding site is contributed by Cys195. Glu491 provides a ligand contact to Mg(2+). Ser517 functions as the Proton acceptor in the catalytic mechanism.

It belongs to the IlvD/Edd family. In terms of assembly, homodimer. The cofactor is [2Fe-2S] cluster. Requires Mg(2+) as cofactor.

The catalysed reaction is (2R)-2,3-dihydroxy-3-methylbutanoate = 3-methyl-2-oxobutanoate + H2O. It carries out the reaction (2R,3R)-2,3-dihydroxy-3-methylpentanoate = (S)-3-methyl-2-oxopentanoate + H2O. It functions in the pathway amino-acid biosynthesis; L-isoleucine biosynthesis; L-isoleucine from 2-oxobutanoate: step 3/4. It participates in amino-acid biosynthesis; L-valine biosynthesis; L-valine from pyruvate: step 3/4. Functionally, functions in the biosynthesis of branched-chain amino acids. Catalyzes the dehydration of (2R,3R)-2,3-dihydroxy-3-methylpentanoate (2,3-dihydroxy-3-methylvalerate) into 2-oxo-3-methylpentanoate (2-oxo-3-methylvalerate) and of (2R)-2,3-dihydroxy-3-methylbutanoate (2,3-dihydroxyisovalerate) into 2-oxo-3-methylbutanoate (2-oxoisovalerate), the penultimate precursor to L-isoleucine and L-valine, respectively. The chain is Dihydroxy-acid dehydratase from Agrobacterium fabrum (strain C58 / ATCC 33970) (Agrobacterium tumefaciens (strain C58)).